The following is a 197-amino-acid chain: Recombination protein RecR (197 aa).

A C4-type zinc finger spans residues 56 to 71 (CRLCNNFSEAEVCEVC). The 96-residue stretch at 79–174 (RQLAVVEMPA…KVSRLARGVP (96 aa)) folds into the Toprim domain.

This sequence belongs to the RecR family.

Functionally, may play a role in DNA repair. It seems to be involved in an RecBC-independent recombinational process of DNA repair. It may act with RecF and RecO. The chain is Recombination protein RecR from Thiobacillus denitrificans (strain ATCC 25259 / T1).